The chain runs to 342 residues: MSEAIKTDVLIIGAGPCGLFAVFELGLLDIKAHLIDILDKVGGQCAELYPEKPIYDIPGVPMVTGQGLTDQLMEQIKPFSPTFHLGEMVEKVEKIGDPGFRVTTDAGKVFECKVVVIAAGGGSFQPKRPPVPGIEAYEGTSVFYAVRKMEQFRDKNVVIVGGGDSALDWTLNLHPLAKRITLVHRRDDFRAAPHSVEQMRALVASGKMDLRIGQVSALEGANGVLAAASIKGNDNSVETVACDMMLPFFGLTMKLGPVADWGIALENNLIPVETSAFETSVPGIFAIGDINTYPGKIKLILCGFHEGALMAQKAHRYVYPEKRLVFQYTTSSSSLQKKLGVN.

FAD contacts are provided by Cys17, Asp36, Gln44, Tyr49, Val89, Phe124, Asp289, and Thr330.

This sequence belongs to the ferredoxin--NADP reductase type 2 family. Homodimer. Requires FAD as cofactor.

It catalyses the reaction 2 reduced [2Fe-2S]-[ferredoxin] + NADP(+) + H(+) = 2 oxidized [2Fe-2S]-[ferredoxin] + NADPH. In Bradyrhizobium sp. (strain BTAi1 / ATCC BAA-1182), this protein is Ferredoxin--NADP reductase.